A 65-amino-acid chain; its full sequence is Photosystem II reaction center protein J (65 aa).

Positions 1–17 (MSTKLKGPDGRIPDRLP) are enriched in basic and acidic residues. The tract at residues 1–21 (MSTKLKGPDGRIPDRLPDGSP) is disordered. The chain crosses the membrane as a helical span at residues 36 to 56 (LWLVATVGGMAVLSVLGLFFF).

Belongs to the PsbJ family. In terms of assembly, PSII is composed of 1 copy each of membrane proteins PsbA, PsbB, PsbC, PsbD, PsbE, PsbF, PsbH, PsbI, PsbJ, PsbK, PsbL, PsbM, PsbT, PsbX, PsbY, Psb30/Ycf12, peripheral proteins PsbO, CyanoQ (PsbQ), PsbU, PsbV and a large number of cofactors. It forms dimeric complexes.

Its subcellular location is the cellular thylakoid membrane. Functionally, one of the components of the core complex of photosystem II (PSII). PSII is a light-driven water:plastoquinone oxidoreductase that uses light energy to abstract electrons from H(2)O, generating O(2) and a proton gradient subsequently used for ATP formation. It consists of a core antenna complex that captures photons, and an electron transfer chain that converts photonic excitation into a charge separation. The protein is Photosystem II reaction center protein J of Prochlorococcus marinus (strain MIT 9313).